A 323-amino-acid chain; its full sequence is MRNPQLNKHGELQHLLTIDGLPRSILTAILDTAAPFTEVAEREVKKLPLLRGKSIFNLFFENSTRTRTTFEIAAKRLSADVVNLNVSTSSAAKGESLLDTVDNLSAMQADMFVVRHAASGAPFLIAQHLFATGRDHIHVVNAGDGRHAHPTQGLLDMYTIRHFKRDFTNLTIAIVGDVLHSRVARSQIGALTTLGVPEVRVIGPKTLLPTDVERLGVRVFHDIREGLRGVDVVMMLRLQNERMNGALLPTPQEFYKVWGLTAEKLALAKPDAIVMHPGPMNRGVEIDSSVADGAQAVILPQVTFGIAVRMAVMSMLAGQQGSK.

2 residues coordinate carbamoyl phosphate: R65 and T66. K93 provides a ligand contact to L-aspartate. Carbamoyl phosphate contacts are provided by R115, H149, and Q152. The L-aspartate site is built by R182 and R237. The carbamoyl phosphate site is built by G278 and P279.

This sequence belongs to the aspartate/ornithine carbamoyltransferase superfamily. ATCase family. In terms of assembly, heterododecamer (2C3:3R2) of six catalytic PyrB chains organized as two trimers (C3), and six regulatory PyrI chains organized as three dimers (R2).

The catalysed reaction is carbamoyl phosphate + L-aspartate = N-carbamoyl-L-aspartate + phosphate + H(+). The protein operates within pyrimidine metabolism; UMP biosynthesis via de novo pathway; (S)-dihydroorotate from bicarbonate: step 2/3. Functionally, catalyzes the condensation of carbamoyl phosphate and aspartate to form carbamoyl aspartate and inorganic phosphate, the committed step in the de novo pyrimidine nucleotide biosynthesis pathway. This is Aspartate carbamoyltransferase catalytic subunit from Aromatoleum aromaticum (strain DSM 19018 / LMG 30748 / EbN1) (Azoarcus sp. (strain EbN1)).